The primary structure comprises 317 residues: Putative ribose-phosphate pyrophosphokinase (317 aa).

Residues 211 to 224 (GRDVIVLDDEIAKG) are binding of phosphoribosylpyrophosphate.

Belongs to the ribose-phosphate pyrophosphokinase family.

The enzyme catalyses D-ribose 5-phosphate + ATP = 5-phospho-alpha-D-ribose 1-diphosphate + AMP + H(+). The polypeptide is Putative ribose-phosphate pyrophosphokinase (Streptomyces coelicolor (strain ATCC BAA-471 / A3(2) / M145)).